The chain runs to 452 residues: Probable intron-encoded endonuclease 2 (452 aa).

3 helical membrane-spanning segments follow: residues 1–21 (MNIT…NRKN), 22–42 (IILM…LILV), and 57–77 (IYII…LVAF). Residues 1 to 80 (MNITLILFLI…LAILVAFYRL (80 aa)) form a ndh-4L exon 1 encoded region. The interval 81–452 (INSPVKNPRS…SLEGGMNKNI (372 aa)) is ndh-4L intron 1 encoded.

It in the N-terminal section; belongs to the complex I subunit 4L family. This sequence in the C-terminal section; belongs to the LAGLIDADG endonuclease family.

The protein localises to the mitochondrion membrane. Functionally, mitochondrial DNA endonuclease involved in intron homing. The chain is Probable intron-encoded endonuclease 2 from Neurospora crassa (strain ATCC 24698 / 74-OR23-1A / CBS 708.71 / DSM 1257 / FGSC 987).